The following is a 306-amino-acid chain: MSVKQKSALQDLVDFAKWHVWTRVRPSSRARLAYELFADDHEATTEGAYINLGYWKPGCAGLEEANQELANQLAEAAGISEGDEVLDVGFGLGAQDFFWLETRKPARIVGVDLTPSHVRIASERAERENVQDRLQFKEGSATDLPFGAETFDRVTSLESALHYEPRTDFFKGAFEVLKPGGVLAIGDIIPLDLREPGSDGPPKLAPQRSGSLSGGIPVENWVPRETYAKQLREAGFVDVEVKSVRDNVMEPWLDYWLRKLQDESFKKSVSRLFYSQVKRSLTSDSGMKGELPALDFVIASARKPGA.

Leu157 and His162 together coordinate S-adenosyl-L-methionine.

The protein belongs to the methyltransferase superfamily.

It carries out the reaction erythromycin C + S-adenosyl-L-methionine = erythromycin A + S-adenosyl-L-homocysteine + H(+). It catalyses the reaction erythromycin D + S-adenosyl-L-methionine = erythromycin B + S-adenosyl-L-homocysteine + H(+). The protein operates within antibiotic biosynthesis; erythromycin biosynthesis. S-adenosyl-L-methionine-dependent O-methyltransferase that catalyzes the last step in the erythromycin biosynthesis pathway. Methylates the position 3 of the mycarosyl moiety of erythromycin C, forming the most active form of the antibiotic, erythromycin A. Can also methylate the precursor erythromycin D, forming erythromycin B. The polypeptide is Erythromycin 3''-O-methyltransferase (eryG) (Saccharopolyspora erythraea (strain ATCC 11635 / DSM 40517 / JCM 4748 / NBRC 13426 / NCIMB 8594 / NRRL 2338)).